A 530-amino-acid chain; its full sequence is Type 2 DNA topoisomerase 6 subunit B (530 aa).

ATP-binding positions include N42, D76, 97-98 (SK), 106-113 (GMYGLGVK), and K427.

Belongs to the TOP6B family. Homodimer. Heterotetramer of two Top6A and two Top6B chains.

It carries out the reaction ATP-dependent breakage, passage and rejoining of double-stranded DNA.. Its function is as follows. Relaxes both positive and negative superturns and exhibits a strong decatenase activity. This Saccharolobus islandicus (strain M.16.4 / Kamchatka #3) (Sulfolobus islandicus) protein is Type 2 DNA topoisomerase 6 subunit B.